The chain runs to 824 residues: Ent-copalyl diphosphate synthase AN1, chloroplastic (824 aa).

Residues 1-63 constitute a chloroplast transit peptide; the sequence is MPYPHPYPWQ…SSAKVFQTSR (63 aa). A disordered region spans residues 1 to 87; it reads MPYPHPYPWQ…QDLEDEHQAE (87 aa). Residues 44–63 show a composition bias toward polar residues; the sequence is ATTTQQPDNVSSAKVFQTSR. K247 serves as a coordination point for substrate. The Mg(2+) site is built by D379 and D381. A DXDD motif motif is present at residues 379–382; it reads DVDD. K465 contacts substrate.

It belongs to the terpene synthase family. Tpsc subfamily. Requires Mg(2+) as cofactor.

The protein resides in the plastid. The protein localises to the chloroplast. The catalysed reaction is (2E,6E,10E)-geranylgeranyl diphosphate = ent-copalyl diphosphate. It participates in plant hormone biosynthesis; gibberellin biosynthesis. In terms of biological role, involved in giberellin biosynthesis. Catalyzes the conversion of geranylgeranyl diphosphate to the gibberellin precursor ent-copalyl diphosphate. This Zea mays (Maize) protein is Ent-copalyl diphosphate synthase AN1, chloroplastic.